Consider the following 430-residue polypeptide: Long-chain specific acyl-CoA dehydrogenase, mitochondrial (430 aa).

A mitochondrion-targeting transit peptide spans 1–30; that stretch reads MATRLLRGSLRLWGGLCAPRLPTASRCSHS. Lysine 42 carries the N6-acetyllysine modification. Phosphoserine is present on residues serine 54 and serine 55. 2 positions are modified to N6-acetyllysine; alternate: lysine 66 and lysine 81. Residues lysine 66 and lysine 81 each carry the N6-succinyllysine; alternate modification. Lysine 92 and lysine 95 each carry N6-acetyllysine. At lysine 165 the chain carries N6-succinyllysine. FAD contacts are provided by residues 170 to 179 and 203 to 205; these read IAMTEPGAGS and FIT. A substrate-binding site is contributed by serine 179. 227–228 is a binding site for substrate; the sequence is AH. An N6-succinyllysine modification is found at lysine 240. An N6-acetyllysine; alternate mark is found at lysine 254 and lysine 279. N6-succinyllysine; alternate is present on residues lysine 254 and lysine 279. Substrate-binding positions include tyrosine 282 and 289-292; that span reads PQER. The Proton acceptor role is filled by glutamate 291. Arginine 317 provides a ligand contact to FAD. Lysine 318 carries the N6-acetyllysine modification. The residue at position 322 (lysine 322) is an N6-acetyllysine; alternate. Lysine 322 bears the N6-succinyllysine; alternate mark. Glutamine 328 is an FAD binding site. Lysine 358 is modified (N6-acetyllysine). Serine 362 bears the Phosphoserine mark. 385 to 389 provides a ligand contact to FAD; sequence QLHGG. 412 to 413 contacts substrate; sequence GG. Residue 414-416 coordinates FAD; sequence TNE.

The protein belongs to the acyl-CoA dehydrogenase family. Homotetramer. FAD serves as cofactor. Post-translationally, acetylation at Lys-318 and Lys-322 in proximity of the cofactor-binding sites strongly reduces catalytic activity. These sites are deacetylated by SIRT3.

Its subcellular location is the mitochondrion matrix. It catalyses the reaction a long-chain 2,3-saturated fatty acyl-CoA + oxidized [electron-transfer flavoprotein] + H(+) = a long-chain (2E)-enoyl-CoA + reduced [electron-transfer flavoprotein]. It carries out the reaction hexanoyl-CoA + oxidized [electron-transfer flavoprotein] + H(+) = (2E)-hexenoyl-CoA + reduced [electron-transfer flavoprotein]. The catalysed reaction is octanoyl-CoA + oxidized [electron-transfer flavoprotein] + H(+) = (2E)-octenoyl-CoA + reduced [electron-transfer flavoprotein]. The enzyme catalyses decanoyl-CoA + oxidized [electron-transfer flavoprotein] + H(+) = (2E)-decenoyl-CoA + reduced [electron-transfer flavoprotein]. It catalyses the reaction dodecanoyl-CoA + oxidized [electron-transfer flavoprotein] + H(+) = (2E)-dodecenoyl-CoA + reduced [electron-transfer flavoprotein]. It carries out the reaction tetradecanoyl-CoA + oxidized [electron-transfer flavoprotein] + H(+) = (2E)-tetradecenoyl-CoA + reduced [electron-transfer flavoprotein]. The catalysed reaction is oxidized [electron-transfer flavoprotein] + hexadecanoyl-CoA + H(+) = (2E)-hexadecenoyl-CoA + reduced [electron-transfer flavoprotein]. The enzyme catalyses octadecanoyl-CoA + oxidized [electron-transfer flavoprotein] + H(+) = (2E)-octadecenoyl-CoA + reduced [electron-transfer flavoprotein]. It catalyses the reaction eicosanoyl-CoA + oxidized [electron-transfer flavoprotein] + H(+) = (2E)-eicosenoyl-CoA + reduced [electron-transfer flavoprotein]. It carries out the reaction docosanoyl-CoA + oxidized [electron-transfer flavoprotein] + H(+) = (2E)-docosenoyl-CoA + reduced [electron-transfer flavoprotein]. The catalysed reaction is tetracosanoyl-CoA + oxidized [electron-transfer flavoprotein] + H(+) = (2E)-tetracosenoyl-CoA + reduced [electron-transfer flavoprotein]. The enzyme catalyses (5E)-tetradecenoyl-CoA + oxidized [electron-transfer flavoprotein] + H(+) = (2E,5E)-tetradecadienoyl-CoA + reduced [electron-transfer flavoprotein]. It catalyses the reaction (5Z)-tetradecenoyl-CoA + oxidized [electron-transfer flavoprotein] + H(+) = (2E,5Z)-tetradecadienoyl-CoA + reduced [electron-transfer flavoprotein]. It carries out the reaction oxidized [electron-transfer flavoprotein] + (9Z)-octadecenoyl-CoA + H(+) = (2E,9Z)-octadecadienoyl-CoA + reduced [electron-transfer flavoprotein]. It functions in the pathway lipid metabolism; mitochondrial fatty acid beta-oxidation. In terms of biological role, long-chain specific acyl-CoA dehydrogenase is one of the acyl-CoA dehydrogenases that catalyze the first step of mitochondrial fatty acid beta-oxidation, an aerobic process breaking down fatty acids into acetyl-CoA and allowing the production of energy from fats. The first step of fatty acid beta-oxidation consists in the removal of one hydrogen from C-2 and C-3 of the straight-chain fatty acyl-CoA thioester, resulting in the formation of trans-2-enoyl-CoA. Among the different mitochondrial acyl-CoA dehydrogenases, long-chain specific acyl-CoA dehydrogenase can act on saturated and unsaturated acyl-CoAs with 6 to 24 carbons with a preference for 8 to 18 carbons long primary chains. This is Long-chain specific acyl-CoA dehydrogenase, mitochondrial from Sus scrofa (Pig).